Reading from the N-terminus, the 605-residue chain is Isocitrate dehydrogenase kinase/phosphatase (605 aa).

ATP contacts are provided by residues 327–333 and Lys348; that span reads APGIKGL. Asp383 is a catalytic residue.

Belongs to the AceK family.

Its subcellular location is the cytoplasm. The enzyme catalyses L-seryl-[isocitrate dehydrogenase] + ATP = O-phospho-L-seryl-[isocitrate dehydrogenase] + ADP + H(+). Bifunctional enzyme which can phosphorylate or dephosphorylate isocitrate dehydrogenase (IDH) on a specific serine residue. This is a regulatory mechanism which enables bacteria to bypass the Krebs cycle via the glyoxylate shunt in response to the source of carbon. When bacteria are grown on glucose, IDH is fully active and unphosphorylated, but when grown on acetate or ethanol, the activity of IDH declines drastically concomitant with its phosphorylation. This chain is Isocitrate dehydrogenase kinase/phosphatase, found in Burkholderia orbicola (strain AU 1054).